Here is a 666-residue protein sequence, read N- to C-terminus: DNA ligase (666 aa).

Residues Asp34 to Asp38, Ser83 to Leu84, and Glu114 each bind NAD(+). The active-site N6-AMP-lysine intermediate is Lys116. Arg137, Glu174, Lys290, and Lys314 together coordinate NAD(+). Cys408, Cys411, Cys424, and Cys429 together coordinate Zn(2+). Residues Ser584–Gly666 enclose the BRCT domain.

It belongs to the NAD-dependent DNA ligase family. LigA subfamily. Mg(2+) is required as a cofactor. Mn(2+) serves as cofactor.

The catalysed reaction is NAD(+) + (deoxyribonucleotide)n-3'-hydroxyl + 5'-phospho-(deoxyribonucleotide)m = (deoxyribonucleotide)n+m + AMP + beta-nicotinamide D-nucleotide.. Functionally, DNA ligase that catalyzes the formation of phosphodiester linkages between 5'-phosphoryl and 3'-hydroxyl groups in double-stranded DNA using NAD as a coenzyme and as the energy source for the reaction. It is essential for DNA replication and repair of damaged DNA. This Coprothermobacter proteolyticus (strain ATCC 35245 / DSM 5265 / OCM 4 / BT) protein is DNA ligase.